We begin with the raw amino-acid sequence, 383 residues long: MNDVIRDFFKMESAGGILLVIAAAIAMTIANSPLGETYQSVLHTYVFGMSVSHWINDGLMAVFFLLIGLEVKRELLEGALKSKETAIFPAIAAVGGMLAPALIYVAFNANDPEAISGWAIPAATDIAFALGIIALLGKRVPVSLKVFLLALAIIDDLGVVVIIALFYTGDLSTMALLVGFIMTGVLFMLNAKEVTKLTPYMIVGAILWFAVLKSGVHATLAGVVIGFAIPLKGKQGEHSPLKHMEHALHPYVAFGILPLFAFANAGISLEGVSMSGLTSMLPLGIALGLLVGKPLGIFTFSWAAVKMGVAKLPEGVNFKHIFAVSVLCGIGFTMSIFISSLAFGNVSPEFDTYARLGILMGSTTAALLGYALLHFSLPKKAQA.

The next 11 helical transmembrane spans lie at 14-34, 47-67, 87-107, 117-137, 146-166, 171-191, 205-225, 252-272, 280-300, 321-341, and 356-376; these read AGGI…NSPL, FGMS…FLLI, IFPA…YVAF, GWAI…ALLG, VFLL…IALF, LSTM…MLNA, AILW…GVVI, VAFG…LEGV, MLPL…IFTF, IFAV…ISSL, and LGIL…LHFS.

This sequence belongs to the NhaA Na(+)/H(+) (TC 2.A.33) antiporter family.

It localises to the cell inner membrane. The catalysed reaction is Na(+)(in) + 2 H(+)(out) = Na(+)(out) + 2 H(+)(in). Functionally, na(+)/H(+) antiporter that extrudes sodium in exchange for external protons. The chain is Na(+)/H(+) antiporter NhaA from Vibrio alginolyticus.